Reading from the N-terminus, the 1417-residue chain is DNA-directed RNA polymerase subunit beta' (1417 aa).

Residues Cys-68, Cys-70, Cys-83, and Cys-86 each contribute to the Zn(2+) site. Asp-458, Asp-460, and Asp-462 together coordinate Mg(2+). Zn(2+)-binding residues include Cys-811, Cys-884, Cys-891, and Cys-894.

This sequence belongs to the RNA polymerase beta' chain family. As to quaternary structure, the RNAP catalytic core consists of 2 alpha, 1 beta, 1 beta' and 1 omega subunit. When a sigma factor is associated with the core the holoenzyme is formed, which can initiate transcription. Requires Mg(2+) as cofactor. Zn(2+) serves as cofactor.

It carries out the reaction RNA(n) + a ribonucleoside 5'-triphosphate = RNA(n+1) + diphosphate. Its function is as follows. DNA-dependent RNA polymerase catalyzes the transcription of DNA into RNA using the four ribonucleoside triphosphates as substrates. The chain is DNA-directed RNA polymerase subunit beta' from Francisella tularensis subsp. novicida (strain U112).